Consider the following 250-residue polypeptide: Hydroxyacylglutathione hydrolase (250 aa).

Residues His-53, His-55, Asp-57, His-58, His-110, Asp-127, and His-165 each coordinate Zn(2+).

The protein belongs to the metallo-beta-lactamase superfamily. Glyoxalase II family. As to quaternary structure, monomer. It depends on Zn(2+) as a cofactor.

It catalyses the reaction an S-(2-hydroxyacyl)glutathione + H2O = a 2-hydroxy carboxylate + glutathione + H(+). The protein operates within secondary metabolite metabolism; methylglyoxal degradation; (R)-lactate from methylglyoxal: step 2/2. Thiolesterase that catalyzes the hydrolysis of S-D-lactoyl-glutathione to form glutathione and D-lactic acid. The chain is Hydroxyacylglutathione hydrolase from Buchnera aphidicola subsp. Schizaphis graminum (strain Sg).